The sequence spans 596 residues: Mitoguardin 2 (596 aa).

Transmembrane regions (helical) follow at residues Ile11–Gly31 and Leu40–Leu60. Disordered regions lie at residues Arg67–Glu158 and Ala576–Asp596. Positions Met110–Val123 are enriched in polar residues. Residues Ser124–Ser140 are compositionally biased toward low complexity. Polar residues-rich tracts occupy residues Val143 to Asn152 and Gln583 to Asp596.

The protein belongs to the mitoguardin family. Homodimer and heterodimer; forms heterodimers with miga1.

It is found in the mitochondrion outer membrane. Functionally, regulator of mitochondrial fusion: acts by forming homo- and heterodimers at the mitochondrial outer membrane and facilitating the formation of pld6/MitoPLD dimers. May act by regulating phospholipid metabolism via pld6/MitoPLD. This is Mitoguardin 2 from Danio rerio (Zebrafish).